The chain runs to 302 residues: Taste receptor type 2 member 104 (302 aa).

The Extracellular portion of the chain corresponds to 1–7 (MLSALES). The chain crosses the membrane as a helical span at residues 8–28 (ILLSVATSEAMLGVLGNTFIV). Over 29–43 (LVNYTDWVRNKKLSK) the chain is Cytoplasmic. The helical transmembrane segment at 44–64 (INFILTGLAISRIFTIWIITL) threads the bilayer. The Extracellular segment spans residues 65–87 (DAYTKVFLLTMLMPSSLHECMSY). A helical transmembrane segment spans residues 88 to 108 (IWVIINHLSVWFSTSLGIFYF). The Cytoplasmic portion of the chain corresponds to 109–128 (LKIANFSHYIFLWMKRRADK). A helical transmembrane segment spans residues 129-149 (VFVFLIVFLIITWLASFPLAV). Topologically, residues 150–182 (KVIKDVKIYQSNTSWLIHLEKSELLINYVFANM) are extracellular. Asn161 carries an N-linked (GlcNAc...) asparagine glycan. Residues 183-203 (GPISLFIVAIIACFLLTISLW) traverse the membrane as a helical segment. Topologically, residues 204–229 (RHSRQMQSIGSGFRDLNTEAHMKAMK) are cytoplasmic. A helical transmembrane segment spans residues 230-250 (VLIAFIILFILYFLGILIETL). Over 251 to 259 (CLFLTNNKL) the chain is Extracellular. Residues 260-280 (LFIFGFTLSAMYPCCHSFILI) form a helical membrane-spanning segment. Topologically, residues 281 to 302 (LTSRELKQATMRALQRLKCCET) are cytoplasmic.

Belongs to the G-protein coupled receptor T2R family.

The protein localises to the membrane. Its function is as follows. Putative taste receptor which may play a role in the perception of bitterness. The protein is Taste receptor type 2 member 104 of Mus musculus (Mouse).